The sequence spans 426 residues: Serine--tRNA ligase (426 aa).

Basic and acidic residues predominate over residues 1–15; that stretch reads MIDVKDLSENPDKFR. The interval 1–22 is disordered; sequence MIDVKDLSENPDKFRASQRARG. 228–230 is a binding site for L-serine; that stretch reads TSE. ATP is bound by residues 259–261 and valine 275; that span reads RRE. An L-serine-binding site is contributed by glutamate 282. 346–349 contacts ATP; the sequence is ELTS. Residue threonine 386 participates in L-serine binding.

This sequence belongs to the class-II aminoacyl-tRNA synthetase family. Type-1 seryl-tRNA synthetase subfamily. As to quaternary structure, homodimer. The tRNA molecule binds across the dimer.

The protein resides in the cytoplasm. The enzyme catalyses tRNA(Ser) + L-serine + ATP = L-seryl-tRNA(Ser) + AMP + diphosphate + H(+). It carries out the reaction tRNA(Sec) + L-serine + ATP = L-seryl-tRNA(Sec) + AMP + diphosphate + H(+). It participates in aminoacyl-tRNA biosynthesis; selenocysteinyl-tRNA(Sec) biosynthesis; L-seryl-tRNA(Sec) from L-serine and tRNA(Sec): step 1/1. Functionally, catalyzes the attachment of serine to tRNA(Ser). Is also able to aminoacylate tRNA(Sec) with serine, to form the misacylated tRNA L-seryl-tRNA(Sec), which will be further converted into selenocysteinyl-tRNA(Sec). In Pseudarthrobacter chlorophenolicus (strain ATCC 700700 / DSM 12829 / CIP 107037 / JCM 12360 / KCTC 9906 / NCIMB 13794 / A6) (Arthrobacter chlorophenolicus), this protein is Serine--tRNA ligase.